We begin with the raw amino-acid sequence, 253 residues long: Proteasome subunit alpha (253 aa).

The span at 232–242 shows a compositional bias: low complexity; sequence AAGASTAGEAG. The segment at 232–253 is disordered; that stretch reads AAGASTAGEAGSAEDEGSDDEK. Positions 243-253 are enriched in acidic residues; sequence SAEDEGSDDEK.

The protein belongs to the peptidase T1A family. As to quaternary structure, the 20S proteasome core is composed of 14 alpha and 14 beta subunits that assemble into four stacked heptameric rings, resulting in a barrel-shaped structure. The two inner rings, each composed of seven catalytic beta subunits, are sandwiched by two outer rings, each composed of seven alpha subunits. The catalytic chamber with the active sites is on the inside of the barrel. Has a gated structure, the ends of the cylinder being occluded by the N-termini of the alpha-subunits. Is capped by the proteasome-associated ATPase, ARC.

It localises to the cytoplasm. Its pathway is protein degradation; proteasomal Pup-dependent pathway. Its activity is regulated as follows. The formation of the proteasomal ATPase ARC-20S proteasome complex, likely via the docking of the C-termini of ARC into the intersubunit pockets in the alpha-rings, may trigger opening of the gate for substrate entry. Interconversion between the open-gate and close-gate conformations leads to a dynamic regulation of the 20S proteasome proteolysis activity. Functionally, component of the proteasome core, a large protease complex with broad specificity involved in protein degradation. In Streptomyces avermitilis (strain ATCC 31267 / DSM 46492 / JCM 5070 / NBRC 14893 / NCIMB 12804 / NRRL 8165 / MA-4680), this protein is Proteasome subunit alpha.